A 266-amino-acid polypeptide reads, in one-letter code: Putative expansin-A30 (266 aa).

Positions 1–24 (MAAASSTTATTAILAAVIISLAGA) are cleaved as a signal peptide. The Expansin-like EG45 domain occupies 55–170 (GGACGYGNLY…RRVPCARAGG (116 aa)). The region spanning 180 to 261 (YWLLAYVMNV…SWCFGLTYQA (82 aa)) is the Expansin-like CBD domain.

This sequence belongs to the expansin family. Expansin A subfamily.

It localises to the secreted. It is found in the cell wall. The protein resides in the membrane. Its function is as follows. May cause loosening and extension of plant cell walls by disrupting non-covalent bonding between cellulose microfibrils and matrix glucans. No enzymatic activity has been found. May be required for rapid internodal elongation in deepwater rice during submergence. The sequence is that of Putative expansin-A30 (EXPA30) from Oryza sativa subsp. japonica (Rice).